The chain runs to 84 residues: Small ribosomal subunit protein bS20 (84 aa).

The protein belongs to the bacterial ribosomal protein bS20 family.

Binds directly to 16S ribosomal RNA. This chain is Small ribosomal subunit protein bS20, found in Limosilactobacillus fermentum (strain NBRC 3956 / LMG 18251) (Lactobacillus fermentum).